The following is a 332-amino-acid chain: Small ribosomal subunit biogenesis GTPase RsgA (332 aa).

In terms of domain architecture, CP-type G spans 103-259 (RQQLIAANLD…LIDTPGMREL (157 aa)). Residues 148 to 151 (TKVD) and 201 to 209 (GSSGAGKST) contribute to the GTP site. Zn(2+) contacts are provided by Cys-281, Cys-286, His-288, and Cys-294.

The protein belongs to the TRAFAC class YlqF/YawG GTPase family. RsgA subfamily. As to quaternary structure, monomer. Associates with 30S ribosomal subunit, binds 16S rRNA. Requires Zn(2+) as cofactor.

It localises to the cytoplasm. Its function is as follows. One of several proteins that assist in the late maturation steps of the functional core of the 30S ribosomal subunit. Helps release RbfA from mature subunits. May play a role in the assembly of ribosomal proteins into the subunit. Circularly permuted GTPase that catalyzes slow GTP hydrolysis, GTPase activity is stimulated by the 30S ribosomal subunit. The chain is Small ribosomal subunit biogenesis GTPase RsgA from Xylella fastidiosa (strain M23).